A 501-amino-acid polypeptide reads, in one-letter code: Ribose import ATP-binding protein RbsA (501 aa).

ABC transporter domains are found at residues 5-241 and 252-495; these read LQLK…VGRK and APGE…VGKL. Residue 37–44 coordinates ATP; sequence GENGAGKS.

The protein belongs to the ABC transporter superfamily. Ribose importer (TC 3.A.1.2.1) family. In terms of assembly, the complex is composed of an ATP-binding protein (RbsA), two transmembrane proteins (RbsC) and a solute-binding protein (RbsB).

The protein localises to the cell inner membrane. It carries out the reaction D-ribose(out) + ATP + H2O = D-ribose(in) + ADP + phosphate + H(+). Functionally, part of the ABC transporter complex RbsABC involved in ribose import. Responsible for energy coupling to the transport system. This chain is Ribose import ATP-binding protein RbsA, found in Salmonella typhi.